The sequence spans 144 residues: ATP synthase subunit 9, mitochondrial (144 aa).

The N-terminal 63 residues, 1–63 (MASTRVLASR…ATRQITQKRA (63 aa)), are a transit peptide targeting the mitochondrion. 2 helical membrane passes run 83–103 (TAAI…AALL) and 120–140 (AILG…VALM).

Belongs to the ATPase C chain family. As to quaternary structure, F-type ATPases have 2 components, CF(1) - the catalytic core - and CF(0) - the membrane proton channel. CF(1) has five subunits: alpha(3), beta(3), gamma(1), delta(1), epsilon(1). CF(0) has three main subunits: a, b and c.

The protein localises to the mitochondrion membrane. Mitochondrial membrane ATP synthase (F(1)F(0) ATP synthase or Complex V) produces ATP from ADP in the presence of a proton gradient across the membrane which is generated by electron transport complexes of the respiratory chain. F-type ATPases consist of two structural domains, F(1) - containing the extramembraneous catalytic core and F(0) - containing the membrane proton channel, linked together by a central stalk and a peripheral stalk. During catalysis, ATP synthesis in the catalytic domain of F(1) is coupled via a rotary mechanism of the central stalk subunits to proton translocation. Part of the complex F(0) domain. A homomeric c-ring of probably 10 subunits is part of the complex rotary element. This is ATP synthase subunit 9, mitochondrial (ATP9) from Podospora anserina (Pleurage anserina).